Consider the following 172-residue polypeptide: Cytidylate kinase (172 aa).

8 to 16 (GPPGSGKST) provides a ligand contact to ATP.

It belongs to the cytidylate kinase family. Type 2 subfamily.

The protein resides in the cytoplasm. It carries out the reaction CMP + ATP = CDP + ADP. It catalyses the reaction dCMP + ATP = dCDP + ADP. The chain is Cytidylate kinase from Ignicoccus hospitalis (strain KIN4/I / DSM 18386 / JCM 14125).